A 181-amino-acid chain; its full sequence is Putative poly [ADP-ribose] polymerase-like 100L (181 aa).

The region spanning 1–181 (MDNLKEEETN…KIKYIIHITK (181 aa)) is the PARP catalytic domain.

The enzyme catalyses NAD(+) + (ADP-D-ribosyl)n-acceptor = nicotinamide + (ADP-D-ribosyl)n+1-acceptor + H(+).. The sequence is that of Putative poly [ADP-ribose] polymerase-like 100L from Invertebrate iridescent virus 6 (IIV-6).